Here is a 148-residue protein sequence, read N- to C-terminus: Sporulation inhibitor of replication protein SirA (148 aa).

The protein belongs to the SirA family. In terms of assembly, interacts with DnaA. Forms a 1:1 complex with domain I of DnaA.

It is found in the cytoplasm. Its function is as follows. Inhibits DNA replication initiation during sporulation, preventing overinitiation and thus enforcing diploidy; probably the main regulator of sporulation replication initiation under Spo0A control. During sporulation SirA prevents DnaA association with the replication origin to prevent excessive chromosome replication. Alternatively SirA binds to domain I of DnaA and prevent its interaction with DnaD, preventing DNA replication initiation. Upon ectopic expression during vegetative growth reduces chromosome copy number, leading to elongated cells with that can have a single nucleoid or be anucleate. Ectopic expression during vegetative growth blocks DnaA at oriC while blocking recruitment of DnaD to oriC. Plays a significant role during the onset of sporulation. In Bacillus subtilis (strain 168), this protein is Sporulation inhibitor of replication protein SirA.